A 231-amino-acid polypeptide reads, in one-letter code: Ureidoacrylate amidohydrolase RutB (231 aa).

The active-site Proton acceptor is Asp25. Lys134 is a catalytic residue. Cys167 (nucleophile) is an active-site residue.

Belongs to the isochorismatase family. RutB subfamily.

It catalyses the reaction (Z)-3-ureidoacrylate + H2O + H(+) = (Z)-3-aminoacrylate + NH4(+) + CO2. The catalysed reaction is (Z)-3-ureidoacrylate + H2O = (Z)-3-aminoacrylate + carbamate + H(+). The enzyme catalyses (Z)-2-methylureidoacrylate + H2O + H(+) = (Z)-2-methylaminoacrylate + NH4(+) + CO2. Functionally, hydrolyzes ureidoacrylate to form aminoacrylate and carbamate. The carbamate hydrolyzes spontaneously, thereby releasing one of the nitrogen atoms of the pyrimidine ring as ammonia and one of its carbon atoms as CO2. This is Ureidoacrylate amidohydrolase RutB from Escherichia coli (strain SMS-3-5 / SECEC).